A 132-amino-acid chain; its full sequence is NADH-quinone oxidoreductase subunit A 2 (132 aa).

A run of 3 helical transmembrane segments spans residues 10 to 30 (WALLAYLFGALALCLLMLGLG), 66 to 86 (LVAMLFVIFGIEMPFLYLWAV), and 93 to 113 (WAGFVEATLFVSLLLVGLFYL).

This sequence belongs to the complex I subunit 3 family. As to quaternary structure, NDH-1 is composed of 13 different subunits. Subunits NuoA, H, J, K, L, M, N constitute the membrane sector of the complex.

The protein resides in the cell inner membrane. The enzyme catalyses a quinone + NADH + 5 H(+)(in) = a quinol + NAD(+) + 4 H(+)(out). Functionally, NDH-1 shuttles electrons from NADH, via FMN and iron-sulfur (Fe-S) centers, to quinones in the respiratory chain. The immediate electron acceptor for the enzyme in this species is believed to be ubiquinone. Couples the redox reaction to proton translocation (for every two electrons transferred, four hydrogen ions are translocated across the cytoplasmic membrane), and thus conserves the redox energy in a proton gradient. This is NADH-quinone oxidoreductase subunit A 2 from Pseudomonas aeruginosa (strain UCBPP-PA14).